The sequence spans 644 residues: Type III restriction-modification enzyme EcoP15I Mod subunit (644 aa).

The tract at residues 123-126 (DPPY) is binding of S-adenosyl methionine.

Belongs to the N(4)/N(6)-methyltransferase family. As to quaternary structure, forms a homodimer capable of methylating the target sequence in the absence of Res. A heterotetramer with stoichiometry Res(2)Mod(2). A heterotrimer with stoichiometry Res(1)Mod(2).

It catalyses the reaction a 2'-deoxyadenosine in DNA + S-adenosyl-L-methionine = an N(6)-methyl-2'-deoxyadenosine in DNA + S-adenosyl-L-homocysteine + H(+). A beta subtype methylase that binds the system-specific DNA recognition site 5'-CAGCAG-3' and methylates A-5 (of only 1 strand as the other does not have an A residue). DNA restriction requires both the Res and Mod subunits. The A-5 nucleotide flips into the catalytic pocket of one Mod subunit for modification, while the other Mod subunit makes most of the DNA sequence-specific contacts. The chain is Type III restriction-modification enzyme EcoP15I Mod subunit from Escherichia coli.